A 314-amino-acid chain; its full sequence is Homeobox-leucine zipper protein HAT7 (314 aa).

The tract at residues 77–109 (HHHLTQKSPTTTNNMNDQDQVGEEDNLSDDGSH) is disordered. Polar residues predominate over residues 82–95 (QKSPTTTNNMNDQD). The segment at residues 112–171 (LGEKKKRLNLEQVRALEKSFELGNKLEPERKMQLAKALGLQPRQIAIWFQNRRARWKTKQ) is a DNA-binding region (homeobox). The tract at residues 172–207 (LERDYDSLKKQFDVLKSDNDSLLAHNKKLHAELVAL) is leucine-zipper.

Belongs to the HD-ZIP homeobox family. Class I subfamily. Expressed predominantly in flowers, and in the cortex of the root and the stem.

It is found in the nucleus. Probable transcription factor. The chain is Homeobox-leucine zipper protein HAT7 (HAT7) from Arabidopsis thaliana (Mouse-ear cress).